Reading from the N-terminus, the 493-residue chain is Catalase A (493 aa).

Residues 1-24 (MKRKLTGLFGAPVSDRENSMTAGP) form a disordered region. Residues His-53 and Asn-126 contribute to the active site. Tyr-336 is a binding site for heme.

The protein belongs to the catalase family. Homodimer. The cofactor is heme.

It carries out the reaction 2 H2O2 = O2 + 2 H2O. Functionally, decomposes hydrogen peroxide into water and oxygen; serves to protect cells from the toxic effects of hydrogen peroxide. The sequence is that of Catalase A (katA) from Staphylococcus xylosus.